We begin with the raw amino-acid sequence, 205 residues long: Putative epidermin response regulator (205 aa).

The segment at residues 103 to 200 (KYIKYVNDDF…ERKLGYKILI (98 aa)) is a DNA-binding region (ompR/PhoB-type).

It to the C-terminus of E.coli phosphate regulon transcriptional regulatory protein PhoB.

The chain is Putative epidermin response regulator (epiQ) from Staphylococcus epidermidis.